We begin with the raw amino-acid sequence, 122 residues long: Large ribosomal subunit protein uL18 (122 aa).

Residues 1–16 are compositionally biased toward basic residues; it reads MFKKVDRKASRQKKQM. Residues 1 to 29 form a disordered region; sequence MFKKVDRKASRQKKQMSIRNKISGTPERP.

This sequence belongs to the universal ribosomal protein uL18 family. Part of the 50S ribosomal subunit; part of the 5S rRNA/L5/L18/L25 subcomplex. Contacts the 5S and 23S rRNAs.

Its function is as follows. This is one of the proteins that bind and probably mediate the attachment of the 5S RNA into the large ribosomal subunit, where it forms part of the central protuberance. This Fusobacterium nucleatum subsp. nucleatum (strain ATCC 25586 / DSM 15643 / BCRC 10681 / CIP 101130 / JCM 8532 / KCTC 2640 / LMG 13131 / VPI 4355) protein is Large ribosomal subunit protein uL18.